The chain runs to 219 residues: Thiamine-phosphate synthase (219 aa).

4-amino-2-methyl-5-(diphosphooxymethyl)pyrimidine is bound by residues 48–52 and asparagine 84; that span reads QFRQK. Positions 85 and 104 each coordinate Mg(2+). A 4-amino-2-methyl-5-(diphosphooxymethyl)pyrimidine-binding site is contributed by serine 123. 150 to 152 is a binding site for 2-[(2R,5Z)-2-carboxy-4-methylthiazol-5(2H)-ylidene]ethyl phosphate; it reads TPS. Lysine 153 serves as a coordination point for 4-amino-2-methyl-5-(diphosphooxymethyl)pyrimidine. 2-[(2R,5Z)-2-carboxy-4-methylthiazol-5(2H)-ylidene]ethyl phosphate contacts are provided by residues glycine 181 and 199–200; that span reads IS.

The protein belongs to the thiamine-phosphate synthase family. Requires Mg(2+) as cofactor.

It catalyses the reaction 2-[(2R,5Z)-2-carboxy-4-methylthiazol-5(2H)-ylidene]ethyl phosphate + 4-amino-2-methyl-5-(diphosphooxymethyl)pyrimidine + 2 H(+) = thiamine phosphate + CO2 + diphosphate. It carries out the reaction 2-(2-carboxy-4-methylthiazol-5-yl)ethyl phosphate + 4-amino-2-methyl-5-(diphosphooxymethyl)pyrimidine + 2 H(+) = thiamine phosphate + CO2 + diphosphate. The enzyme catalyses 4-methyl-5-(2-phosphooxyethyl)-thiazole + 4-amino-2-methyl-5-(diphosphooxymethyl)pyrimidine + H(+) = thiamine phosphate + diphosphate. The protein operates within cofactor biosynthesis; thiamine diphosphate biosynthesis; thiamine phosphate from 4-amino-2-methyl-5-diphosphomethylpyrimidine and 4-methyl-5-(2-phosphoethyl)-thiazole: step 1/1. Condenses 4-methyl-5-(beta-hydroxyethyl)thiazole monophosphate (THZ-P) and 2-methyl-4-amino-5-hydroxymethyl pyrimidine pyrophosphate (HMP-PP) to form thiamine monophosphate (TMP). The chain is Thiamine-phosphate synthase from Helicobacter pylori (strain HPAG1).